The following is a 107-amino-acid chain: Phosphoribosyl-ATP pyrophosphatase (107 aa).

It belongs to the PRA-PH family.

It localises to the cytoplasm. The enzyme catalyses 1-(5-phospho-beta-D-ribosyl)-ATP + H2O = 1-(5-phospho-beta-D-ribosyl)-5'-AMP + diphosphate + H(+). It functions in the pathway amino-acid biosynthesis; L-histidine biosynthesis; L-histidine from 5-phospho-alpha-D-ribose 1-diphosphate: step 2/9. The polypeptide is Phosphoribosyl-ATP pyrophosphatase (Bacillus cereus (strain G9842)).